The primary structure comprises 955 residues: Protein translocase subunit SecA (955 aa).

ATP-binding positions include Q87, 105–109 (GEGKT), and D494. Positions 861-955 (AAPAPAAPRP…KKAPRTKRKR (95 aa)) are disordered. Residues 874–888 (QEAAQQAQGTAAPSA) are compositionally biased toward low complexity. Over residues 943–955 (SKGKKAPRTKRKR) the composition is skewed to basic residues.

It belongs to the SecA family. Monomer and homodimer. Part of the essential Sec protein translocation apparatus which comprises SecA, SecYEG and auxiliary proteins SecDF. Other proteins may also be involved.

The protein localises to the cell membrane. It localises to the cytoplasm. The enzyme catalyses ATP + H2O + cellular proteinSide 1 = ADP + phosphate + cellular proteinSide 2.. Its function is as follows. Part of the Sec protein translocase complex. Interacts with the SecYEG preprotein conducting channel. Has a central role in coupling the hydrolysis of ATP to the transfer of proteins into and across the cell membrane, serving as an ATP-driven molecular motor driving the stepwise translocation of polypeptide chains across the membrane. In Rhodococcus opacus (strain B4), this protein is Protein translocase subunit SecA.